A 475-amino-acid polypeptide reads, in one-letter code: Aspartyl/glutamyl-tRNA(Asn/Gln) amidotransferase subunit B (475 aa).

This sequence belongs to the GatB/GatE family. GatB subfamily. Heterotrimer of A, B and C subunits.

It catalyses the reaction L-glutamyl-tRNA(Gln) + L-glutamine + ATP + H2O = L-glutaminyl-tRNA(Gln) + L-glutamate + ADP + phosphate + H(+). The enzyme catalyses L-aspartyl-tRNA(Asn) + L-glutamine + ATP + H2O = L-asparaginyl-tRNA(Asn) + L-glutamate + ADP + phosphate + 2 H(+). Allows the formation of correctly charged Asn-tRNA(Asn) or Gln-tRNA(Gln) through the transamidation of misacylated Asp-tRNA(Asn) or Glu-tRNA(Gln) in organisms which lack either or both of asparaginyl-tRNA or glutaminyl-tRNA synthetases. The reaction takes place in the presence of glutamine and ATP through an activated phospho-Asp-tRNA(Asn) or phospho-Glu-tRNA(Gln). The sequence is that of Aspartyl/glutamyl-tRNA(Asn/Gln) amidotransferase subunit B from Pelodictyon phaeoclathratiforme (strain DSM 5477 / BU-1).